A 268-amino-acid polypeptide reads, in one-letter code: Hydroxyethylthiazole kinase (268 aa).

M44 provides a ligand contact to substrate. ATP is bound by residues R119 and S165. G192 contacts substrate.

The protein belongs to the Thz kinase family. Mg(2+) serves as cofactor.

The enzyme catalyses 5-(2-hydroxyethyl)-4-methylthiazole + ATP = 4-methyl-5-(2-phosphooxyethyl)-thiazole + ADP + H(+). Its pathway is cofactor biosynthesis; thiamine diphosphate biosynthesis; 4-methyl-5-(2-phosphoethyl)-thiazole from 5-(2-hydroxyethyl)-4-methylthiazole: step 1/1. Its function is as follows. Catalyzes the phosphorylation of the hydroxyl group of 4-methyl-5-beta-hydroxyethylthiazole (THZ). This chain is Hydroxyethylthiazole kinase, found in Corynebacterium glutamicum (strain R).